Here is a 212-residue protein sequence, read N- to C-terminus: Large ribosomal subunit protein uL3 (212 aa).

An N5-methylglutamine modification is found at Q153.

Belongs to the universal ribosomal protein uL3 family. Part of the 50S ribosomal subunit. Forms a cluster with proteins L14 and L19. Post-translationally, methylated by PrmB.

Its function is as follows. One of the primary rRNA binding proteins, it binds directly near the 3'-end of the 23S rRNA, where it nucleates assembly of the 50S subunit. This chain is Large ribosomal subunit protein uL3, found in Dechloromonas aromatica (strain RCB).